The primary structure comprises 642 residues: Threonine--tRNA ligase (642 aa).

One can recognise a TGS domain in the interval methionine 1–threonine 61. Residues aspartate 243–proline 534 are catalytic. Positions 334, 385, and 511 each coordinate Zn(2+).

Belongs to the class-II aminoacyl-tRNA synthetase family. Homodimer. Zn(2+) is required as a cofactor.

It is found in the cytoplasm. The catalysed reaction is tRNA(Thr) + L-threonine + ATP = L-threonyl-tRNA(Thr) + AMP + diphosphate + H(+). Its function is as follows. Catalyzes the attachment of threonine to tRNA(Thr) in a two-step reaction: L-threonine is first activated by ATP to form Thr-AMP and then transferred to the acceptor end of tRNA(Thr). Also edits incorrectly charged L-seryl-tRNA(Thr). The polypeptide is Threonine--tRNA ligase (Proteus mirabilis (strain HI4320)).